A 241-amino-acid chain; its full sequence is Octanoyltransferase (241 aa).

The BPL/LPL catalytic domain maps to Ala-43 to Pro-228. Substrate-binding positions include Arg-83 to His-90, Ala-159 to Gly-161, and Gly-172 to Ser-174. Catalysis depends on Cys-190, which acts as the Acyl-thioester intermediate.

The protein belongs to the LipB family.

The protein localises to the cytoplasm. The enzyme catalyses octanoyl-[ACP] + L-lysyl-[protein] = N(6)-octanoyl-L-lysyl-[protein] + holo-[ACP] + H(+). It participates in protein modification; protein lipoylation via endogenous pathway; protein N(6)-(lipoyl)lysine from octanoyl-[acyl-carrier-protein]: step 1/2. Functionally, catalyzes the transfer of endogenously produced octanoic acid from octanoyl-acyl-carrier-protein onto the lipoyl domains of lipoate-dependent enzymes. Lipoyl-ACP can also act as a substrate although octanoyl-ACP is likely to be the physiological substrate. This chain is Octanoyltransferase, found in Paraburkholderia xenovorans (strain LB400).